The following is a 286-amino-acid chain: Shikimate dehydrogenase (NADP(+)) (286 aa).

Shikimate-binding positions include 22-24 (SRS) and T71. The active-site Proton acceptor is K75. E87 contacts NADP(+). N96 and D111 together coordinate shikimate. NADP(+) is bound by residues 136 to 140 (GAGGA), 160 to 165 (NRTPER), and I225. Y227 is a binding site for shikimate. G248 is an NADP(+) binding site.

Belongs to the shikimate dehydrogenase family. As to quaternary structure, homodimer.

It catalyses the reaction shikimate + NADP(+) = 3-dehydroshikimate + NADPH + H(+). Its pathway is metabolic intermediate biosynthesis; chorismate biosynthesis; chorismate from D-erythrose 4-phosphate and phosphoenolpyruvate: step 4/7. Functionally, involved in the biosynthesis of the chorismate, which leads to the biosynthesis of aromatic amino acids. Catalyzes the reversible NADPH linked reduction of 3-dehydroshikimate (DHSA) to yield shikimate (SA). The protein is Shikimate dehydrogenase (NADP(+)) of Rhizobium meliloti (strain 1021) (Ensifer meliloti).